We begin with the raw amino-acid sequence, 139 residues long: D-ribose pyranase (139 aa).

The active-site Proton donor is the His-20. Substrate contacts are provided by residues Asp-28, His-106, and 128–130; that span reads YAN.

Belongs to the RbsD / FucU family. RbsD subfamily. Homodecamer.

The protein resides in the cytoplasm. It carries out the reaction beta-D-ribopyranose = beta-D-ribofuranose. It functions in the pathway carbohydrate metabolism; D-ribose degradation; D-ribose 5-phosphate from beta-D-ribopyranose: step 1/2. In terms of biological role, catalyzes the interconversion of beta-pyran and beta-furan forms of D-ribose. The chain is D-ribose pyranase from Vibrio parahaemolyticus serotype O3:K6 (strain RIMD 2210633).